Consider the following 992-residue polypeptide: Aminopeptidase Q (992 aa).

At 2-13 (GPPSSSGFYVSR) the chain is on the cytoplasmic side. The helical; Signal-anchor for type II membrane protein transmembrane segment at 14 to 34 (AVALLLAALAAALLLALAVLA) threads the bilayer. Topologically, residues 35-992 (ALYGRCARVQ…RMTAWLRKNT (958 aa)) are extracellular. The interval 47–92 (DLHHSGVPDAASSPRGTQEEPLPTWPPRPTREPAGTATPGHWRPPG) is disordered. Residue N133 is glycosylated (N-linked (GlcNAc...) asparagine). E241 provides a ligand contact to substrate. N-linked (GlcNAc...) asparagine glycosylation is found at N262, N289, N347, and N361. 380 to 384 (SAMEN) lines the substrate pocket. Residue H416 participates in Zn(2+) binding. The Proton acceptor role is filled by E417. H420 and E439 together coordinate Zn(2+). Y505 functions as the Proton donor in the catalytic mechanism. Residues N555, N584, N602, N609, N655, N811, N850, and N889 are each glycosylated (N-linked (GlcNAc...) asparagine).

The protein belongs to the peptidase M1 family. The cofactor is Zn(2+). Expressed in skin. Expression levels do not differ between dark and light skin areas.

The protein localises to the membrane. Metalloprotease which may be important for placentation by regulating biological activity of key peptides at the embryo-maternal interface. Involved in coat pigmentation patterns. During skin development, may be required to establish the periodicity of tabby markings, initiating a pre-pattern at or before hair follicle development. This Felis catus (Cat) protein is Aminopeptidase Q (LVRN).